Consider the following 364-residue polypeptide: tRNA 2-selenouridine synthase (364 aa).

A Rhodanese domain is found at 14–137 (LIADTPIIDV…LRQTAIQATI (124 aa)). C97 functions as the S-selanylcysteine intermediate in the catalytic mechanism.

The protein belongs to the SelU family. In terms of assembly, monomer.

The enzyme catalyses 5-methylaminomethyl-2-thiouridine(34) in tRNA + selenophosphate + (2E)-geranyl diphosphate + H2O + H(+) = 5-methylaminomethyl-2-selenouridine(34) in tRNA + (2E)-thiogeraniol + phosphate + diphosphate. It catalyses the reaction 5-methylaminomethyl-2-thiouridine(34) in tRNA + (2E)-geranyl diphosphate = 5-methylaminomethyl-S-(2E)-geranyl-thiouridine(34) in tRNA + diphosphate. It carries out the reaction 5-methylaminomethyl-S-(2E)-geranyl-thiouridine(34) in tRNA + selenophosphate + H(+) = 5-methylaminomethyl-2-(Se-phospho)selenouridine(34) in tRNA + (2E)-thiogeraniol. The catalysed reaction is 5-methylaminomethyl-2-(Se-phospho)selenouridine(34) in tRNA + H2O = 5-methylaminomethyl-2-selenouridine(34) in tRNA + phosphate. Its function is as follows. Involved in the post-transcriptional modification of the uridine at the wobble position (U34) of tRNA(Lys), tRNA(Glu) and tRNA(Gln). Catalyzes the conversion of 2-thiouridine (S2U-RNA) to 2-selenouridine (Se2U-RNA). Acts in a two-step process involving geranylation of 2-thiouridine (S2U) to S-geranyl-2-thiouridine (geS2U) and subsequent selenation of the latter derivative to 2-selenouridine (Se2U) in the tRNA chain. This chain is tRNA 2-selenouridine synthase, found in Escherichia coli (strain SMS-3-5 / SECEC).